A 1630-amino-acid polypeptide reads, in one-letter code: MMVKQEEPLNEISPNTPMTSKSYLLNDTLSKVHHSGQTRPLTSVLSGDASSNSIGILAMHNNIIRDFTKIASNNIDLAIEDITTVDHSLNSIYSLLKSHHMWGHINSTVKQHLMIIVKLINNNALGLASSEIIFLFNETNLFQAHSLKNILLADFSTWNDYYLSNLKILALQIILKRKLVDEYLPHILELFSHDKRYLLKDPNLKAHALTKIVLSFFSVTTSCKVLFGLKFLQYIKQFKLPFKKFISNITVECFSKNLLHKNYLEMGPNKIYLNSFYLSYSMLYDGLDKIMLLDILSYEETTEVQRAIKSKKEFNEYCNMSENRLLWSCISVDDLNVILENATNFLQNKGKHISATLKCLVCLWSTIRLEGLPKNKDILRQFDCTVIYINSNIKSINDESAAALLSELLGVLSEICIDYKEPKRLSNIISVLFNASVLFKSHSFLLKTANLEISNVLISNDSKTSHRTILKFEKFISSAQSAQKKIEIFSCLFNVYCMLRNDTLSFVFDFCQNAFIHCFTRLKITKFIEFSNSSEIMLSVLYGNSSIENIPSENWSQLSRMIFCSLRGIFDLDPLELNNTFDKLHLLNKYELLIRIVYLLNLDMSKHLTTNLSKITKLYINKWLQKSDEKAERISSFEMDFVKMLLCYLNFNNFDKLSIELSLCIKSKEKYYSSIVPYADNYLLEAYLSLYMIDDALMMKNQLQKTMNLSTAKIEQALLHASSLINVHLWDSDLTAFQIYFGKTLPAMKPELFDINNDHNLPMSLYIKVILLNIKIFNESAKLNIKAGNVISAVIDCRKAQNLALSLLKKKNKLSQGSRLALLKSLSFSFFQLIKIHIRIGSARDCEFYSKELSRIISDLEEPIIVYRCLHFLHRYYMITEQTCLQNITLGKANKAFDYLDAEADITSLTMFLYDNKEFVKLEQSLVLYFGDQLEKTFLPNLWKLHLGKDIDDSICLSEYMPKNVINRVHNMWQKVMSQLEEDPFFKGMFESTLGIPSSLPVIPSTMPNNILKTPSKHSTGLKLCDSPRSSSMTPRGKNIRQKFDRIAAISKLKQMKELLESLKLDTLDNHELSKISSLSSLTLTILSNITSIHNAESSLITNFSLTDLPRHMPLLFDKVLNNIDNKNYREFRVSSLIAPNNISTITESIRVSAAQKDLMESNLNINVITIDFCPITGNLLLSKLEPRRKRRTHLRLPLIRSNSRDLDEVHLSFPEATKKLLSIINESNQTTSVEVTNKIKTREERKSWWTTRYDLDKRMQQLLNNIENSWFNGVQGFFSPEVVDNSLFEKFKDKFYEILHQNLPSRKLYGNPAMFIKVEDWVIELFLKLNPQEIDFLSKMEDLIYFVLDILLFHGEENAYDEIDFSMLHVQLEEQIKKYRATMTTNSIFHTFLVVSSSCHLFPWECLSFLKDLSITRVPSYVCLNKLLSRFHYQLPLQVTIEDNISMILNPNGDLSRTESKFKGMFQKIIDAKPSSQLVMNEKPEEETLLKMLQNSNLFVYIGHGGGEQYVRSKEIKKCTKIAPSFLLGCSSAAMKYYGKLEPTGTIYTYLLGGCPMVLGNLWDVTDKDIDKFSEELFEKMGFRCNTDDLNGNSLSVSYAVSKSRGVCHLRYLNGAAPVIYGLPIKFVS.

Residues 1016–1037 are disordered; it reads SKHSTGLKLCDSPRSSSMTPRG. The region spanning 1443-1542 is the Peptidase C50 domain; sequence EDNISMILNP…SAAMKYYGKL (100 aa). Residue cysteine 1531 is part of the active site.

May bind calcium. Interacts with PDS1. Interacts with MCD1.

It localises to the nucleus. The protein localises to the cytoplasm. It is found in the cytoskeleton. Its subcellular location is the microtubule organizing center. The protein resides in the spindle pole body. It catalyses the reaction All bonds known to be hydrolyzed by this endopeptidase have arginine in P1 and an acidic residue in P4. P6 is often occupied by an acidic residue or by a hydroxy-amino-acid residue, the phosphorylation of which enhances cleavage.. It is inactivated via its interaction with PDS1, which probably covers its active site. PDS1 degradation at anaphase, liberates it and triggers MCD1 cleavage. Caspase-like protease, which plays a central role in the chromosome segregation by cleaving the MCD1/SCC1 subunit of the cohesin complex at the onset of anaphase. During most of the cell cycle, it is inactivated by securin/PDS1 protein. It also promotes anaphase spindle elongation. A component of the FEAR (CDC14 early anaphase release) network which promotes CDC14 release from the nucleolus during early anaphase. Cleaves SLK19. The protein is Separin (ESP1) of Saccharomyces cerevisiae (strain ATCC 204508 / S288c) (Baker's yeast).